Here is a 144-residue protein sequence, read N- to C-terminus: MLFFNVASLKYKHHESIQMIIDRIDHLVLTVSDISTTIRFYEEVLGFSAVTFKQNRKALIFGAQKINLHQQEMEFEPKASRPTPGSADLCFITSTPINDVVSEILQAGISIVEGPVERTGATGEIMSIYIRDPDGNLIEISQYV.

Residues 23 to 143 enclose the VOC domain; that stretch reads RIDHLVLTVS…DGNLIEISQY (121 aa).

Its function is as follows. Is critically involved in promoting the replication of S.typhimurium cells inside host macrophages, suggesting a role in the establishment of bacterial colonization within macrophages. May be involved in the biosynthesis and modification of the peptidoglycan layer of the cell wall. The polypeptide is Virulence protein STM3117 (Salmonella typhimurium (strain LT2 / SGSC1412 / ATCC 700720)).